Reading from the N-terminus, the 267-residue chain is Regulatory protein VirG (267 aa).

Residues 29 to 143 (HVLLVDDDVA…EFLARIRVAL (115 aa)) form the Response regulatory domain. At D78 the chain carries 4-aspartylphosphate. A DNA-binding region (ompR/PhoB-type) is located at residues 155–255 (RRSFCFTDWT…ARGAGYFFDA (101 aa)).

In terms of processing, phosphorylated by wide host range (WHR) VirA protein.

Its subcellular location is the cytoplasm. In terms of biological role, virG is required for the positive regulation of at least two vir loci encoded by the Ti plasmid of A.tumefaciens. The polypeptide is Regulatory protein VirG (virG) (Rhizobium radiobacter (Agrobacterium tumefaciens)).